Here is a 252-residue protein sequence, read N- to C-terminus: Major prion protein (252 aa).

Positions 1–22 (MANLGYWMLVLFVATWSDLGLC) are cleaved as a signal peptide. An interaction with GRB2, ERI3 and SYN1 region spans residues 23–229 (KKRPKPGGWN…ESQAYYQRGS (207 aa)). Residues 26–104 (PKPGGWNTGG…HNQWNKPSKP (79 aa)) are disordered. 5 repeat units span residues 51–58 (PQGGGWGQ), 59–66 (PHGGGWGQ), 67–74 (PHGGGWGQ), 75–82 (PHGGGWGQ), and 83–90 (PHGGGWGQ). The interval 51-90 (PQGGGWGQPHGGGWGQPHGGGWGQPHGGGWGQPHGGGWGQ) is 5 X 8 AA tandem repeats of P-H-G-G-G-W-G-Q. Gly residues predominate over residues 52-92 (QGGGWGQPHGGGWGQPHGGGWGQPHGGGWGQPHGGGWGQAG). Cu(2+)-binding residues include His60, Gly61, Gly62, His68, Gly69, Gly70, His76, Gly77, Gly78, His84, Gly85, and Gly86. A disulfide bridge connects residues Cys178 and Cys213. Residues Asn180 and Asn196 are each glycosylated (N-linked (GlcNAc...) asparagine). A lipid anchor (GPI-anchor amidated serine) is attached at Ser229. A propeptide spans 230-252 (SMVLFSSPPVILLISFLIFLIVG) (removed in mature form).

Belongs to the prion family. As to quaternary structure, monomer and homodimer. Has a tendency to aggregate into amyloid fibrils containing a cross-beta spine, formed by a steric zipper of superposed beta-strands. Soluble oligomers may represent an intermediate stage on the path to fibril formation. Copper binding may promote oligomerization. Interacts with GRB2, APP, ERI3/PRNPIP and SYN1. Mislocalized cytosolically exposed PrP interacts with MGRN1; this interaction alters MGRN1 subcellular location and causes lysosomal enlargement. Interacts with KIAA1191.

It localises to the cell membrane. It is found in the golgi apparatus. In terms of biological role, its primary physiological function is unclear. Has cytoprotective activity against internal or environmental stresses. May play a role in neuronal development and synaptic plasticity. May be required for neuronal myelin sheath maintenance. May play a role in iron uptake and iron homeostasis. Soluble oligomers are toxic to cultured neuroblastoma cells and induce apoptosis (in vitro). Association with GPC1 (via its heparan sulfate chains) targets PRNP to lipid rafts. Also provides Cu(2+) or Zn(2+) for the ascorbate-mediated GPC1 deaminase degradation of its heparan sulfate side chains. The protein is Major prion protein (PRNP) of Ateles paniscus (Black spider monkey).